The sequence spans 438 residues: UDP-N-acetylmuramoylalanine--D-glutamate ligase (438 aa).

112-118 is a binding site for ATP; sequence GSNGKST.

The protein belongs to the MurCDEF family.

The protein localises to the cytoplasm. The catalysed reaction is UDP-N-acetyl-alpha-D-muramoyl-L-alanine + D-glutamate + ATP = UDP-N-acetyl-alpha-D-muramoyl-L-alanyl-D-glutamate + ADP + phosphate + H(+). Its pathway is cell wall biogenesis; peptidoglycan biosynthesis. Functionally, cell wall formation. Catalyzes the addition of glutamate to the nucleotide precursor UDP-N-acetylmuramoyl-L-alanine (UMA). This chain is UDP-N-acetylmuramoylalanine--D-glutamate ligase, found in Salmonella paratyphi A (strain ATCC 9150 / SARB42).